The primary structure comprises 480 residues: 11S globulin subunit beta (480 aa).

Positions 1–21 are cleaved as a signal peptide; it reads MARSSLFTFLCLAVFINGCLS. At Gln22 the chain carries Pyrrolidone carboxylic acid. Intrachain disulfides connect Cys48-Cys81 and Cys124-Cys303. 2 consecutive Cupin type-1 domains span residues 51 to 251 and 309 to 458; these read ENLR…GLVR and QNIG…EEAQ. Residues Lys408 and Arg468 each contribute to the Mg(2+) site.

This sequence belongs to the 11S seed storage protein (globulins) family. As to quaternary structure, hexamer; each subunit is composed of an acidic and a basic chain derived from a single precursor and linked by a disulfide bond.

In terms of biological role, this is a seed storage protein. The sequence is that of 11S globulin subunit beta from Cucurbita maxima (Pumpkin).